A 447-amino-acid chain; its full sequence is Citrate synthase-like protein oryE (447 aa).

Residues histidine 331 and aspartate 387 contribute to the active site.

It belongs to the citrate synthase family.

It participates in secondary metabolite biosynthesis. In terms of biological role, citrate synthase-like protein; part of the gene cluster that mediates the biosynthesis of oryzines, natural products with an unusual maleidride backbone. The two subunits of the fungal fatty acid synthase oryfasA and oryfasB probably form octenoic acid. This fatty acid is most likely activated by the acyl-CoA ligase oryP to give octenyl-CoA before the citrate synthase-like protein oryE catalyzes condensation with oxaloacetate to form tricarboxylic acid. The next steps of the pathways are conjectural, but a favorite possible route has been proposed, beginning with decarboxylation and concomitant dehydration by the decarboxylase oryM, followed by tautomerization, which may lead to the production of a diene intermediate. Reduction of this diene intermediate could give the known metabolite piliformic acid. On the pathway to oryzine B and oryzine A, however, hydroxylation of the diene by the alpha-ketoglutarate-dependent dioxygenase oryG and lactonisation by the lactonohydrolases oryH or oryL could give oryzine B directly. Finally, enoyl reduction by the dehydrogenase oryD would then convert oryzine B into oryzine A. In Aspergillus oryzae (strain ATCC 42149 / RIB 40) (Yellow koji mold), this protein is Citrate synthase-like protein oryE.